Reading from the N-terminus, the 333-residue chain is Probable tRNA pseudouridine synthase B (333 aa).

Asp-66 serves as the catalytic Nucleophile. One can recognise a PUA domain in the interval 233 to 308 (LKKIIVKDSA…EVVEITRVIM (76 aa)).

This sequence belongs to the pseudouridine synthase TruB family. Type 2 subfamily.

It carries out the reaction uridine(55) in tRNA = pseudouridine(55) in tRNA. In terms of biological role, could be responsible for synthesis of pseudouridine from uracil-55 in the psi GC loop of transfer RNAs. This is Probable tRNA pseudouridine synthase B from Methanococcus maripaludis (strain C7 / ATCC BAA-1331).